A 387-amino-acid chain; its full sequence is tRNA N6-adenosine threonylcarbamoyltransferase (387 aa).

Fe cation-binding residues include His-112 and His-116. Substrate-binding positions include 134 to 138 (LASGG), Asp-167, Gly-180, and Asn-325. A Fe cation-binding site is contributed by Asp-353.

The protein belongs to the KAE1 / TsaD family. The cofactor is Fe(2+).

It is found in the cytoplasm. It carries out the reaction L-threonylcarbamoyladenylate + adenosine(37) in tRNA = N(6)-L-threonylcarbamoyladenosine(37) in tRNA + AMP + H(+). Functionally, required for the formation of a threonylcarbamoyl group on adenosine at position 37 (t(6)A37) in tRNAs that read codons beginning with adenine. Is involved in the transfer of the threonylcarbamoyl moiety of threonylcarbamoyl-AMP (TC-AMP) to the N6 group of A37, together with TsaE and TsaB. TsaD likely plays a direct catalytic role in this reaction. The protein is tRNA N6-adenosine threonylcarbamoyltransferase of Rickettsia typhi (strain ATCC VR-144 / Wilmington).